The primary structure comprises 452 residues: tRNA modification GTPase MnmE (452 aa).

3 residues coordinate (6S)-5-formyl-5,6,7,8-tetrahydrofolate: R21, E78, and K118. The TrmE-type G domain occupies 214-375 (GMKVVIAGRP…LREHLKKSMG (162 aa)). Residue N224 coordinates K(+). GTP-binding positions include 224-229 (NAGKSS), 243-249 (TNIAGTT), and 268-271 (DTAG). S228 is a Mg(2+) binding site. The K(+) site is built by T243, I245, and T248. T249 is a binding site for Mg(2+). K452 serves as a coordination point for (6S)-5-formyl-5,6,7,8-tetrahydrofolate.

This sequence belongs to the TRAFAC class TrmE-Era-EngA-EngB-Septin-like GTPase superfamily. TrmE GTPase family. Homodimer. Heterotetramer of two MnmE and two MnmG subunits. K(+) serves as cofactor.

It localises to the cytoplasm. Its function is as follows. Exhibits a very high intrinsic GTPase hydrolysis rate. Involved in the addition of a carboxymethylaminomethyl (cmnm) group at the wobble position (U34) of certain tRNAs, forming tRNA-cmnm(5)s(2)U34. The sequence is that of tRNA modification GTPase MnmE from Actinobacillus pleuropneumoniae serotype 5b (strain L20).